The chain runs to 217 residues: MQTGLDFTLVEDLVAGVDEVGRGPLCGAVVTAAVILDPAKPILGLNDSKKLTEAKREKLFVEIQEKALCWFIARAEVEEIDQLNILHATMLAMKRAVEGLSITPKLALIDGNRCPQLSVPSAPVVKGDSKVPAIAAASILAKVSRDREMAALELIYPGYGIAGHKGYPTPVHLEALARLGPTPIHRRSFGPVRTAHEARAAIMLGGSIPLPVGLLQD.

Residues 12–201 (DLVAGVDEVG…VRTAHEARAA (190 aa)) form the RNase H type-2 domain. Residues Asp18, Glu19, and Asp110 each contribute to the a divalent metal cation site.

Belongs to the RNase HII family. Mn(2+) serves as cofactor. Mg(2+) is required as a cofactor.

The protein localises to the cytoplasm. It carries out the reaction Endonucleolytic cleavage to 5'-phosphomonoester.. In terms of biological role, endonuclease that specifically degrades the RNA of RNA-DNA hybrids. This is Ribonuclease HII from Pseudomonas syringae pv. tomato (strain ATCC BAA-871 / DC3000).